The sequence spans 466 residues: 23S rRNA (uracil(1939)-C(5))-methyltransferase RlmD (466 aa).

Residues 1 to 54 enclose the TRAM domain; sequence MVDVLNIESLDLEARGIAHRDGKVLFVEGALPGERVTVQTVRRKPSYEIAKVEE. [4Fe-4S] cluster is bound by residues Cys67, Cys73, Cys76, and Cys155. 6 residues coordinate S-adenosyl-L-methionine: Gln264, Phe293, Asn298, Glu314, Asn342, and Asp363. Cys393 serves as the catalytic Nucleophile.

It belongs to the class I-like SAM-binding methyltransferase superfamily. RNA M5U methyltransferase family. RlmD subfamily.

The catalysed reaction is uridine(1939) in 23S rRNA + S-adenosyl-L-methionine = 5-methyluridine(1939) in 23S rRNA + S-adenosyl-L-homocysteine + H(+). Catalyzes the formation of 5-methyl-uridine at position 1939 (m5U1939) in 23S rRNA. This chain is 23S rRNA (uracil(1939)-C(5))-methyltransferase RlmD, found in Bordetella pertussis (strain Tohama I / ATCC BAA-589 / NCTC 13251).